A 551-amino-acid chain; its full sequence is Calnexin homolog (551 aa).

A signal peptide spans 1 to 26 (MVDRKEIPLAMGLLAVLLFFVASSSS). Residues 27–480 (FHLVRASDEV…EKGEKQPNLT (454 aa)) are Lumenal-facing. Ca(2+) is bound by residues Ser44 and Asp75. Cysteines 118 and 153 form a disulfide. 2 residues coordinate an alpha-D-glucoside: Tyr122 and Lys124. An N-linked (GlcNAc...) asparagine glycan is attached at Asn140. 2 residues coordinate an alpha-D-glucoside: Tyr144 and Asp151. The interval 226 to 330 (ALIPSKTIPD…CGEWKRPTKS (105 aa)) is disordered. The p domain (Extended arm) stretch occupies residues 233–364 (IPDPDDKKPE…QEIPNPEYFE (132 aa)). Composition is skewed to basic and acidic residues over residues 234-269 (PDPDDKKPEDWDERAKIPDPEAVKPEDWDEDAPREI) and 276-295 (KPEPWLDHEPEVDDPEAKPE). Tandem repeats lie at residues 235 to 246 (DPDDKKPEDWDE), 252 to 263 (DPEAVKPEDWDE), 271 to 282 (DEEAEKPEPWLD), 289 to 299 (DPEAKPEDWDD), and 303 to 313 (GEWEAPKIENP). 4 X approximate repeats regions lie at residues 235–299 (DPDD…DWDD) and 303–360 (GEWE…IPNP). The segment covering 296 to 305 (DWDDEEDGEW) has biased composition (acidic residues). Cys315 and Cys321 are joined by a disulfide. Repeat copies occupy residues 322–332 (GEWKRPTKSNP), 336–346 (GKWSAPYIDNP), and 350–360 (GIWKPQEIPNP). Glu379 contacts an alpha-D-glucoside. A Ca(2+)-binding site is contributed by Asp390. Residue Asn478 is glycosylated (N-linked (GlcNAc...) asparagine). Residues 481–501 (IGIIVSVVIVFVSIFFRLIFG) form a helical membrane-spanning segment. Topologically, residues 502–551 (GKKPANVEANVEKKKTNTETTSKQDGGEKEDNKEKEETANPPRRRPKRDN) are cytoplasmic. The disordered stretch occupies residues 510-551 (ANVEKKKTNTETTSKQDGGEKEDNKEKEETANPPRRRPKRDN). Residues 526–539 (DGGEKEDNKEKEET) show a composition bias toward basic and acidic residues.

This sequence belongs to the calreticulin family. In vegetative and flowering tissues.

It is found in the endoplasmic reticulum membrane. Functionally, calcium-binding protein that interacts with newly synthesized monoglucosylated glycoproteins in the endoplasmic reticulum. It may act in assisting protein assembly and/or in the retention within the ER of unassembled protein subunits. It seems to play a major role in the quality control apparatus of the ER by the retention of incorrectly folded proteins. This Pisum sativum (Garden pea) protein is Calnexin homolog.